The sequence spans 269 residues: Zinc import ATP-binding protein ZnuC (269 aa).

The ABC transporter domain occupies 6 to 221 (VRLTQVGVSF…PAFVELFGQD (216 aa)). An ATP-binding site is contributed by 38 to 45 (GPNGAGKT).

It belongs to the ABC transporter superfamily. Zinc importer (TC 3.A.1.15.5) family. In terms of assembly, the complex is composed of two ATP-binding proteins (ZnuC), two transmembrane proteins (ZnuB) and a solute-binding protein (ZnuA).

It is found in the cell inner membrane. The catalysed reaction is Zn(2+)(out) + ATP(in) + H2O(in) = Zn(2+)(in) + ADP(in) + phosphate(in) + H(+)(in). In terms of biological role, part of the ABC transporter complex ZnuABC involved in zinc import. Responsible for energy coupling to the transport system. The sequence is that of Zinc import ATP-binding protein ZnuC from Pseudomonas aeruginosa (strain UCBPP-PA14).